The following is a 181-amino-acid chain: Large ribosomal subunit protein uL5 (181 aa).

This sequence belongs to the universal ribosomal protein uL5 family. Part of the 50S ribosomal subunit; part of the 5S rRNA/L5/L18/L25 subcomplex. Contacts the 5S rRNA and the P site tRNA. Forms a bridge to the 30S subunit in the 70S ribosome.

Its function is as follows. This is one of the proteins that bind and probably mediate the attachment of the 5S RNA into the large ribosomal subunit, where it forms part of the central protuberance. In the 70S ribosome it contacts protein S13 of the 30S subunit (bridge B1b), connecting the 2 subunits; this bridge is implicated in subunit movement. Contacts the P site tRNA; the 5S rRNA and some of its associated proteins might help stabilize positioning of ribosome-bound tRNAs. The chain is Large ribosomal subunit protein uL5 from Clostridium kluyveri (strain NBRC 12016).